Consider the following 87-residue polypeptide: Pyocin-S2 immunity protein (87 aa).

This sequence belongs to the colicins ColE2/ColE8/ColE9 and pyocins S1/S2 family.

The chain is Pyocin-S2 immunity protein (imm2) from Pseudomonas aeruginosa (strain ATCC 15692 / DSM 22644 / CIP 104116 / JCM 14847 / LMG 12228 / 1C / PRS 101 / PAO1).